The sequence spans 220 residues: MDGVLNFLTNINVIFTLLGYLIGGIPFGYALMKIFYGMDITKIGSGGIGATNVLRTLQSRGVSNAKQMALLILILDLFKGMFAVFLSKLFGLDYSLQWMVAIASILGHCYSPFLNFNGGKGVSTIMGSVVLLIPIESLIGLMVWFFVGKVLKISSLASIVGVGTATILIFFVPYMHIPDSVNILKEVGTQTPMVLIFIFTLIKHVGNIFNLLAGKEKKVL.

Transmembrane regions (helical) follow at residues 11-31 (INVI…GYAL), 70-90 (LLIL…SKLF), 96-116 (LQWM…FLNF), 127-147 (GSVV…WFFV), 153-173 (ISSL…FFVP), and 193-213 (MVLI…NLLA).

It belongs to the PlsY family. In terms of assembly, probably interacts with PlsX.

Its subcellular location is the cell inner membrane. The catalysed reaction is an acyl phosphate + sn-glycerol 3-phosphate = a 1-acyl-sn-glycero-3-phosphate + phosphate. It participates in lipid metabolism; phospholipid metabolism. In terms of biological role, catalyzes the transfer of an acyl group from acyl-phosphate (acyl-PO(4)) to glycerol-3-phosphate (G3P) to form lysophosphatidic acid (LPA). This enzyme utilizes acyl-phosphate as fatty acyl donor, but not acyl-CoA or acyl-ACP. This chain is Glycerol-3-phosphate acyltransferase, found in Helicobacter acinonychis (strain Sheeba).